A 551-amino-acid polypeptide reads, in one-letter code: L-lactate permease (551 aa).

Transmembrane regions (helical) follow at residues 13 to 33 (NIWL…FALI), 37 to 57 (LKGY…ALLF), 69 to 89 (VVYG…AAVF), 131 to 151 (GAAG…GLGF), 159 to 179 (LCLI…PILV), 194 to 214 (MVGR…MAIM), 244 to 264 (FIGP…CLTL), 306 to 326 (FLFL…ALFA), 366 to 386 (FDWF…SIVW), 405 to 425 (LALP…SNYS), 438 to 458 (TGSA…FLTG), and 530 to 550 (IFTC…TWMI).

The protein belongs to the lactate permease family.

The protein resides in the cell inner membrane. The enzyme catalyses (S)-lactate(in) + H(+)(in) = (S)-lactate(out) + H(+)(out). It catalyses the reaction (R)-lactate(in) + H(+)(in) = (R)-lactate(out) + H(+)(out). It carries out the reaction glycolate(in) + H(+)(in) = glycolate(out) + H(+)(out). In terms of biological role, uptake of L-lactate across the membrane. Can also transport D-lactate and glycolate. Seems to be driven by a proton motive force. The sequence is that of L-lactate permease (lldP) from Salmonella typhimurium (strain LT2 / SGSC1412 / ATCC 700720).